The chain runs to 206 residues: Large ribosomal subunit protein uL4 (206 aa).

The disordered stretch occupies residues 43–78 (ARSGNRKQKDREEVKHTTKKPWRQKGTGRARAGMSS). Over residues 49 to 58 (KQKDREEVKH) the composition is skewed to basic and acidic residues. The span at 59 to 70 (TTKKPWRQKGTG) shows a compositional bias: basic residues.

It belongs to the universal ribosomal protein uL4 family. In terms of assembly, part of the 50S ribosomal subunit.

Functionally, one of the primary rRNA binding proteins, this protein initially binds near the 5'-end of the 23S rRNA. It is important during the early stages of 50S assembly. It makes multiple contacts with different domains of the 23S rRNA in the assembled 50S subunit and ribosome. Forms part of the polypeptide exit tunnel. The polypeptide is Large ribosomal subunit protein uL4 (Ralstonia pickettii (strain 12J)).